A 155-amino-acid chain; its full sequence is UPF0178 protein TDE_2151 (155 aa).

The protein belongs to the UPF0178 family.

The sequence is that of UPF0178 protein TDE_2151 from Treponema denticola (strain ATCC 35405 / DSM 14222 / CIP 103919 / JCM 8153 / KCTC 15104).